Consider the following 2226-residue polypeptide: DNA polymerase epsilon catalytic subunit A (2226 aa).

Residues 1240-1265 (RVSKVTSRKRRNGKANNVSDSEEEER) are disordered. Zn(2+) contacts are provided by cysteine 2112, cysteine 2115, cysteine 2134, and cysteine 2137. The segment at 2112-2137 (CDYCNYIRDIDFCRDEQKNIWNCSNC) adopts a CysA-type zinc-finger fold. Residues cysteine 2168, cysteine 2171, cysteine 2183, and cysteine 2185 each coordinate [4Fe-4S] cluster. Positions 2168–2185 (CSKCHQIKSDNMSEYCKC) match the CysB motif motif.

Belongs to the DNA polymerase type-B family. As to quaternary structure, heterotetramer. Consists of 4 subunits: POL2, DPB2, DPB3 and DPB4. The cofactor is [4Fe-4S] cluster.

The protein localises to the nucleus. It catalyses the reaction DNA(n) + a 2'-deoxyribonucleoside 5'-triphosphate = DNA(n+1) + diphosphate. In terms of biological role, DNA polymerase II participates in chromosomal DNA replication. This Debaryomyces hansenii (strain ATCC 36239 / CBS 767 / BCRC 21394 / JCM 1990 / NBRC 0083 / IGC 2968) (Yeast) protein is DNA polymerase epsilon catalytic subunit A (POL2).